We begin with the raw amino-acid sequence, 162 residues long: MALITTGNGLIRDLEKFGSVGVYVPLEGGFEGRYRRRLRAAGYTTLQFTARGLGDVAAYLTGVHGVRPPHLGKKSSGNGAAVGNVYYLPPIVGSQLEHLPPKSKGLVLWIIEGHILSDQEVEFLTSLPSLEPRVKVVVERGGDRTFRWKALKDTFSASYQAV.

Belongs to the complex I NdhN subunit family. As to quaternary structure, NDH-1 can be composed of about 15 different subunits; different subcomplexes with different compositions have been identified which probably have different functions.

The protein localises to the cellular thylakoid membrane. The catalysed reaction is a plastoquinone + NADH + (n+1) H(+)(in) = a plastoquinol + NAD(+) + n H(+)(out). It carries out the reaction a plastoquinone + NADPH + (n+1) H(+)(in) = a plastoquinol + NADP(+) + n H(+)(out). NDH-1 shuttles electrons from an unknown electron donor, via FMN and iron-sulfur (Fe-S) centers, to quinones in the respiratory and/or the photosynthetic chain. The immediate electron acceptor for the enzyme in this species is believed to be plastoquinone. Couples the redox reaction to proton translocation, and thus conserves the redox energy in a proton gradient. Cyanobacterial NDH-1 also plays a role in inorganic carbon-concentration. This chain is NAD(P)H-quinone oxidoreductase subunit N, found in Nostoc sp. (strain PCC 7120 / SAG 25.82 / UTEX 2576).